The chain runs to 149 residues: Macrodomain Ter protein (149 aa).

The protein belongs to the MatP family. As to quaternary structure, homodimer.

The protein resides in the cytoplasm. Functionally, required for spatial organization of the terminus region of the chromosome (Ter macrodomain) during the cell cycle. Prevents early segregation of duplicated Ter macrodomains during cell division. Binds specifically to matS, which is a 13 bp signature motif repeated within the Ter macrodomain. The protein is Macrodomain Ter protein of Vibrio vulnificus (strain YJ016).